Here is a 628-residue protein sequence, read N- to C-terminus: Cytoplasmic dynein 1 intermediate chain 1 (628 aa).

2 stretches are compositionally biased toward basic and acidic residues: residues 1–13 (MSDK…ELER) and 20–60 (QIRE…RETE). The interval 1–114 (MSDKSDLKAE…RTLQWDTDPS (114 aa)) is disordered. Serine 2 carries the post-translational modification N-acetylserine. The residue at position 50 (serine 50) is a Phosphoserine. Positions 70-79 (PEPPLVPTPM) are enriched in pro residues. The segment covering 80 to 90 (SPSSKSVSTPS) has biased composition (low complexity). Residue serine 83 is modified to Phosphoserine. Threonine 88 carries the phosphothreonine modification. Serine 90, serine 94, and serine 97 each carry phosphoserine. Residues 105-114 (RTLQWDTDPS) show a composition bias toward polar residues. Positions 130–146 (KLGVSKVTQVDFLPREV) are interaction with DYNLT1. Residues 152-204 (ETQTPLATHQSEEDEEDEEMVEPKIGHDSELENQEKKQETKEAPPRELTEEEK) are disordered. Threonine 159 is modified (phosphothreonine). A phosphoserine mark is found at serine 162 and serine 180. Positions 172 to 204 (VEPKIGHDSELENQEKKQETKEAPPRELTEEEK) are enriched in basic and acidic residues. WD repeat units follow at residues 268–317 (SKHR…TTPE), 321–361 (HCQS…RTPV), 370–411 (AHTH…TPQE), 420–460 (SKPV…AGIG), 465–510 (GHQG…PLYS), 513–553 (DNAD…EVPT), and 559–598 (EGAS…VPHN). Serine 618 is modified (phosphoserine).

This sequence belongs to the dynein intermediate chain family. Homodimer. The cytoplasmic dynein 1 complex consists of two catalytic heavy chains (HCs) and a number of non-catalytic subunits presented by intermediate chains (ICs), light intermediate chains (LICs) and light chains (LCs); the composition seems to vary in respect to the IC, LIC and LC composition. The heavy chain homodimer serves as a scaffold for the probable homodimeric assembly of the respective non-catalytic subunits. The ICs and LICs bind directly to the HC dimer and the LCs assemble on the IC dimer. Interacts with DYNC1H1. Interacts with DYNLT1 and DYNLT3. Interacts with DCTN1. Interacts with DYNLL2. Interacts with MCRS1; the interaction is required for the proper distribution of centriolar satellites.

It is found in the cytoplasm. The protein resides in the chromosome. The protein localises to the centromere. It localises to the kinetochore. Its subcellular location is the cytoskeleton. It is found in the spindle pole. Its function is as follows. Acts as one of several non-catalytic accessory components of the cytoplasmic dynein 1 complex that are thought to be involved in linking dynein to cargos and to adapter proteins that regulate dynein function. Cytoplasmic dynein 1 acts as a motor for the intracellular retrograde motility of vesicles and organelles along microtubules. The intermediate chains mediate the binding of dynein to dynactin via its 150 kDa component (p150-glued) DCTN1. May play a role in mediating the interaction of cytoplasmic dynein with membranous organelles and kinetochores. This is Cytoplasmic dynein 1 intermediate chain 1 (Dync1i1) from Mus musculus (Mouse).